The chain runs to 70 residues: MKKGIHPEYYHDSVVKCACGNTFTTGSTQKELKVEICSKCHPFFTGKQKLVDAGGRVDRFLKKFNLKNEE.

Cys17, Cys19, Cys37, and Cys40 together coordinate Zn(2+).

Belongs to the bacterial ribosomal protein bL31 family. Type A subfamily. In terms of assembly, part of the 50S ribosomal subunit. Zn(2+) is required as a cofactor.

Functionally, binds the 23S rRNA. The protein is Large ribosomal subunit protein bL31 of Clostridium kluyveri (strain NBRC 12016).